A 656-amino-acid chain; its full sequence is Mucin-20 (656 aa).

An N-terminal signal peptide occupies residues 1 to 21; that stretch reads MGSVWGLAVPLLVFCWKVGVS. Composition is skewed to polar residues over residues 85–96, 114–125, and 159–170; these read ATSISSEVNSRD, PAASSLEAQTTS, and TTSPAPSFLDTQ. 3 disordered regions span residues 85-125, 159-232, and 329-348; these read ATSI…QTTS, TTSP…TQTI, and YLSSESSSSSDSSAGVLSSS. Residues 171–227 are compositionally biased toward low complexity; that stretch reads TTSPEPSSLTTSPAPSSLITSPTPSSLTTSPAPSFLDTQTTSPAPSSLTTSPAPSSL. A run of 5 repeats spans residues 180–188, 189–197, 198–206, 210–218, and 219–227. Positions 180 to 227 are approximate repeats; that stretch reads TTSPAPSSLITSPTPSSLTTSPAPSFLDTQTTSPAPSSLTTSPAPSSL. 2 N-linked (GlcNAc...) asparagine glycosylation sites follow: Asn366 and Asn570. An involved in oligomerization region spans residues 399–603; sequence TAALFTSEIL…WIRKTTKHDP (205 aa). The span at 560–573 shows a compositional bias: polar residues; the sequence is STTASTSKNPNITL. Positions 560–592 are disordered; that stretch reads STTASTSKNPNITLTKTTASPKPPTHPTTSAST. Residues 604 to 656 are interaction with MET; sequence GEDGGFLLVRLTVASPKDLTEHNAREKLMNQLRRELHARMPLVHMSFLSIRRG.

Interacts with MET; oligomerization increases affinity for MET. As to expression, highly expressed in kidney. Up-regulated in renal tissues during renal injury.

The protein localises to the secreted. It is found in the apical cell membrane. Its subcellular location is the basolateral cell membrane. The protein resides in the cell projection. It localises to the microvillus membrane. May regulate MET signaling cascade. Seems to decrease hepatocyte growth factor (HGF)-induced transient MAPK activation. Blocks GRB2 recruitment to MET thus suppressing the GRB2-RAS pathway. Inhibits HGF-induced proliferation of MMP1 and MMP9 expression. This is Mucin-20 (Muc20) from Mus musculus (Mouse).